The following is a 229-amino-acid chain: Cytochrome c oxidase subunit 2 (229 aa).

The Mitochondrial intermembrane segment spans residues 1-26; sequence MATWMNINLQDANSSTMEQLTMFHDH. The helical transmembrane segment at 27–48 threads the bilayer; the sequence is TLMILTMITSIVTFIMVSMTTN. Topologically, residues 49-62 are mitochondrial matrix; it reads TLINRYLLEGQTIE. Residues 63 to 82 traverse the membrane as a helical segment; the sequence is FIWTTIPAITLIFIALPSLH. The Mitochondrial intermembrane segment spans residues 83–229; it reads LLYLIDEINN…LKWINKSLSS (147 aa). The Cu cation site is built by His-161, Cys-196, Glu-198, Cys-200, His-204, and Met-207. Glu-198 lines the Mg(2+) pocket.

It belongs to the cytochrome c oxidase subunit 2 family. Component of the cytochrome c oxidase (complex IV, CIV), a multisubunit enzyme composed of a catalytic core of 3 subunits and several supernumerary subunits. The complex exists as a monomer or a dimer and forms supercomplexes (SCs) in the inner mitochondrial membrane with ubiquinol-cytochrome c oxidoreductase (cytochrome b-c1 complex, complex III, CIII). Requires Cu cation as cofactor.

Its subcellular location is the mitochondrion inner membrane. It catalyses the reaction 4 Fe(II)-[cytochrome c] + O2 + 8 H(+)(in) = 4 Fe(III)-[cytochrome c] + 2 H2O + 4 H(+)(out). Its function is as follows. Component of the cytochrome c oxidase, the last enzyme in the mitochondrial electron transport chain which drives oxidative phosphorylation. The respiratory chain contains 3 multisubunit complexes succinate dehydrogenase (complex II, CII), ubiquinol-cytochrome c oxidoreductase (cytochrome b-c1 complex, complex III, CIII) and cytochrome c oxidase (complex IV, CIV), that cooperate to transfer electrons derived from NADH and succinate to molecular oxygen, creating an electrochemical gradient over the inner membrane that drives transmembrane transport and the ATP synthase. Cytochrome c oxidase is the component of the respiratory chain that catalyzes the reduction of oxygen to water. Electrons originating from reduced cytochrome c in the intermembrane space (IMS) are transferred via the dinuclear copper A center (CU(A)) of subunit 2 and heme A of subunit 1 to the active site in subunit 1, a binuclear center (BNC) formed by heme A3 and copper B (CU(B)). The BNC reduces molecular oxygen to 2 water molecules using 4 electrons from cytochrome c in the IMS and 4 protons from the mitochondrial matrix. In Oncopeltus fasciatus (Large milkweed bug), this protein is Cytochrome c oxidase subunit 2 (COII).